The primary structure comprises 93 residues: Acylphosphatase (93 aa).

Positions Arg-7–Arg-93 constitute an Acylphosphatase-like domain. Residues Arg-22 and Asn-40 contribute to the active site.

This sequence belongs to the acylphosphatase family.

The catalysed reaction is an acyl phosphate + H2O = a carboxylate + phosphate + H(+). In Mycobacterium tuberculosis (strain ATCC 25177 / H37Ra), this protein is Acylphosphatase (acyP).